The primary structure comprises 201 residues: Glycerol-3-phosphate acyltransferase (201 aa).

A run of 6 helical transmembrane segments spans residues 3–23 (TVLF…VVVS), 51–71 (KAAI…VWLV), 85–105 (VALV…FRFV), 116–136 (VLLA…LVIA), 137–157 (YAFR…PFYY), and 158–178 (GLLF…ILLV).

The protein belongs to the PlsY family. In terms of assembly, probably interacts with PlsX.

The protein localises to the cell inner membrane. It catalyses the reaction an acyl phosphate + sn-glycerol 3-phosphate = a 1-acyl-sn-glycero-3-phosphate + phosphate. Its pathway is lipid metabolism; phospholipid metabolism. Its function is as follows. Catalyzes the transfer of an acyl group from acyl-phosphate (acyl-PO(4)) to glycerol-3-phosphate (G3P) to form lysophosphatidic acid (LPA). This enzyme utilizes acyl-phosphate as fatty acyl donor, but not acyl-CoA or acyl-ACP. In Janthinobacterium sp. (strain Marseille) (Minibacterium massiliensis), this protein is Glycerol-3-phosphate acyltransferase.